The following is a 518-amino-acid chain: Probable triacylglyceride transporter BCG_1471c (518 aa).

14 helical membrane-spanning segments follow: residues Val7–Val27, Arg46–Gly66, Leu76–Gly96, Ile110–Trp130, Ala144–Leu164, Val170–Pro190, Val201–Tyr221, Val230–Phe250, Pro270–Val290, Ala308–Ile328, Val337–Val357, Leu379–Val401, Ile408–Leu428, and Ile475–Gly495.

This sequence belongs to the major facilitator superfamily.

The protein localises to the cell inner membrane. Its activity is regulated as follows. Inhibited by CCCP and valinomycin. Functionally, in association with lipoprotein LprG probably transports triacylglycerides (TAG) across the inner cell membrane into the periplasm; TAG probably regulates lipid metabolism and growth regulation. Confers resistance to several drugs such as rifampicin, clofazimine and novobiocin; is also part of the oxidative stress response and is needed to maintain normal growth characteristics. Probably an efflux transporter, involved in maintaining correct cell wall permeability. Probably required with LprG for normal surface localization of lipoarabinomannan (LAM). Required for optimal growth on cholesterol. This Mycobacterium bovis (strain BCG / Pasteur 1173P2) protein is Probable triacylglyceride transporter BCG_1471c.